The chain runs to 154 residues: uncharacterized protein (154 aa).

This is an uncharacterized protein from Saccharomyces cerevisiae (strain ATCC 204508 / S288c) (Baker's yeast).